Here is a 278-residue protein sequence, read N- to C-terminus: Deoxyribonuclease-1-like 2 (278 aa).

The signal sequence occupies residues 1–21 (MGWPWAPLTAVWALGVMGATA). Catalysis depends on residues Glu-99 and His-150. Cys-189 and Cys-225 are joined by a disulfide.

It belongs to the DNase I family. The cofactor is Mg(2+). Ca(2+) serves as cofactor.

The protein resides in the cytoplasm. It localises to the secreted. Functionally, divalent cation-dependent acid DNA endonuclease involved in the breakdown of the nucleus during corneocyte formation of epidermal keratinocytes. May play an immune role by eliminating harmful DNA released into the extracellular environment by damaged epidermal cells. The polypeptide is Deoxyribonuclease-1-like 2 (Dnase1l2) (Mus musculus (Mouse)).